A 183-amino-acid polypeptide reads, in one-letter code: Large ribosomal subunit protein uL10 (183 aa).

This sequence belongs to the universal ribosomal protein uL10 family. In terms of assembly, part of the ribosomal stalk of the 50S ribosomal subunit. The N-terminus interacts with L11 and the large rRNA to form the base of the stalk. The C-terminus forms an elongated spine to which L12 dimers bind in a sequential fashion forming a multimeric L10(L12)X complex.

Its function is as follows. Forms part of the ribosomal stalk, playing a central role in the interaction of the ribosome with GTP-bound translation factors. This chain is Large ribosomal subunit protein uL10, found in Mesomycoplasma hyopneumoniae (strain 232) (Mycoplasma hyopneumoniae).